Reading from the N-terminus, the 164-residue chain is NAD(P)H-quinone oxidoreductase subunit I, chloroplastic (164 aa).

2 consecutive 4Fe-4S ferredoxin-type domains span residues Gly55 to Lys84 and Leu95 to Glu124. [4Fe-4S] cluster-binding residues include Cys64, Cys67, Cys70, Cys74, Cys104, Cys107, Cys110, and Cys114.

Belongs to the complex I 23 kDa subunit family. In terms of assembly, NDH is composed of at least 16 different subunits, 5 of which are encoded in the nucleus. Requires [4Fe-4S] cluster as cofactor.

The protein resides in the plastid. The protein localises to the chloroplast thylakoid membrane. It catalyses the reaction a plastoquinone + NADH + (n+1) H(+)(in) = a plastoquinol + NAD(+) + n H(+)(out). The enzyme catalyses a plastoquinone + NADPH + (n+1) H(+)(in) = a plastoquinol + NADP(+) + n H(+)(out). In terms of biological role, NDH shuttles electrons from NAD(P)H:plastoquinone, via FMN and iron-sulfur (Fe-S) centers, to quinones in the photosynthetic chain and possibly in a chloroplast respiratory chain. The immediate electron acceptor for the enzyme in this species is believed to be plastoquinone. Couples the redox reaction to proton translocation, and thus conserves the redox energy in a proton gradient. This Daucus carota (Wild carrot) protein is NAD(P)H-quinone oxidoreductase subunit I, chloroplastic.